The following is a 293-amino-acid chain: Bifunctional protein FolD (293 aa).

Residues 164–166, Ser193, and Thr234 contribute to the NADP(+) site; that span reads GRS.

This sequence belongs to the tetrahydrofolate dehydrogenase/cyclohydrolase family. In terms of assembly, homodimer.

The catalysed reaction is (6R)-5,10-methylene-5,6,7,8-tetrahydrofolate + NADP(+) = (6R)-5,10-methenyltetrahydrofolate + NADPH. It carries out the reaction (6R)-5,10-methenyltetrahydrofolate + H2O = (6R)-10-formyltetrahydrofolate + H(+). Its pathway is one-carbon metabolism; tetrahydrofolate interconversion. Its function is as follows. Catalyzes the oxidation of 5,10-methylenetetrahydrofolate to 5,10-methenyltetrahydrofolate and then the hydrolysis of 5,10-methenyltetrahydrofolate to 10-formyltetrahydrofolate. The sequence is that of Bifunctional protein FolD from Phocaeicola vulgatus (strain ATCC 8482 / DSM 1447 / JCM 5826 / CCUG 4940 / NBRC 14291 / NCTC 11154) (Bacteroides vulgatus).